The sequence spans 380 residues: Guanine nucleotide-binding protein subunit beta (380 aa).

7 WD repeats span residues 64–94 (GHSG…IVWN), 106–136 (LHCP…SIFN), 155–186 (GHKG…VLWD), 203–234 (GHTA…RLWD), 247–277 (GHEG…RLFD), 296–326 (NELP…YVWD), and 342–372 (SHEG…KIWA).

It belongs to the WD repeat G protein beta family. As to quaternary structure, g proteins are composed of 3 units, alpha, beta and gamma. Interacts with the gamma subunits RGG1 and RGG2.

The protein localises to the cell membrane. Guanine nucleotide-binding proteins (G proteins) are involved as modulators or transducers in various transmembrane signaling systems. The beta and gamma chains are required for the GTPase activity, for replacement of GDP by GTP, and for G protein-effector interaction. This Oryza sativa subsp. japonica (Rice) protein is Guanine nucleotide-binding protein subunit beta.